A 572-amino-acid polypeptide reads, in one-letter code: Sulfite reductase [NADPH] hemoprotein beta-component (572 aa).

[4Fe-4S] cluster-binding residues include C437, C443, C482, and C486. Siroheme is bound at residue C486.

The protein belongs to the nitrite and sulfite reductase 4Fe-4S domain family. In terms of assembly, alpha(8)-beta(8). The alpha component is a flavoprotein, the beta component is a hemoprotein. Siroheme serves as cofactor. [4Fe-4S] cluster is required as a cofactor.

It catalyses the reaction hydrogen sulfide + 3 NADP(+) + 3 H2O = sulfite + 3 NADPH + 4 H(+). The protein operates within sulfur metabolism; hydrogen sulfide biosynthesis; hydrogen sulfide from sulfite (NADPH route): step 1/1. In terms of biological role, component of the sulfite reductase complex that catalyzes the 6-electron reduction of sulfite to sulfide. This is one of several activities required for the biosynthesis of L-cysteine from sulfate. This Staphylococcus epidermidis (strain ATCC 35984 / DSM 28319 / BCRC 17069 / CCUG 31568 / BM 3577 / RP62A) protein is Sulfite reductase [NADPH] hemoprotein beta-component.